The chain runs to 143 residues: Sec-independent protein translocase protein TatB (143 aa).

A helical membrane pass occupies residues 2–22; it reads FGNIGWGEFMVLLVAALVILG. A disordered region spans residues 97–143; the sequence is FDKPGSVSFDKSNPGTKAVSADPSTPTAPQNKPLAAGERPPIDLDAT.

It belongs to the TatB family. The Tat system comprises two distinct complexes: a TatABC complex, containing multiple copies of TatA, TatB and TatC subunits, and a separate TatA complex, containing only TatA subunits. Substrates initially bind to the TatABC complex, which probably triggers association of the separate TatA complex to form the active translocon.

It is found in the cell membrane. Part of the twin-arginine translocation (Tat) system that transports large folded proteins containing a characteristic twin-arginine motif in their signal peptide across membranes. Together with TatC, TatB is part of a receptor directly interacting with Tat signal peptides. TatB may form an oligomeric binding site that transiently accommodates folded Tat precursor proteins before their translocation. The sequence is that of Sec-independent protein translocase protein TatB from Rhodococcus opacus (strain B4).